Here is a 199-residue protein sequence, read N- to C-terminus: uncharacterized protein (199 aa).

Residues R71 to D104 adopt a coiled-coil conformation.

This is an uncharacterized protein from Mus musculus (Mouse).